The sequence spans 211 residues: Large ribosomal subunit protein uL4 (211 aa).

The tract at residues 41 to 87 is disordered; sequence QAHARQGTASTLTRSEVRGGGRKPYKQKGTGRARQGSIRTPLRPGGG. Residues 60 to 71 show a composition bias toward basic residues; the sequence is GGRKPYKQKGTG.

This sequence belongs to the universal ribosomal protein uL4 family. Part of the 50S ribosomal subunit.

Its function is as follows. One of the primary rRNA binding proteins, this protein initially binds near the 5'-end of the 23S rRNA. It is important during the early stages of 50S assembly. It makes multiple contacts with different domains of the 23S rRNA in the assembled 50S subunit and ribosome. Functionally, forms part of the polypeptide exit tunnel. In Parasynechococcus marenigrum (strain WH8102), this protein is Large ribosomal subunit protein uL4.